The primary structure comprises 424 residues: MRPLFIRRARQLVTLAGSSAAPLVREKMNDLQIIENGSVWIERGVIIAVGPDDELAHRFADRIGEADVIDARGKTVTPGLIDPHTHLVYAGSREHEWTMRLRGATYMEIMNAGGGIHATTKATREASEEMLYEESKRRLDLFLLHGVTTVEAKSGYGLSFEGEIKQLEVAKRLHDTHPVDVVSTFLGAHAVPPEWKDDRDGYIRLIMEVMIPEVSRRGLAEFNDVFCERGVFTPDEARRILEAGKAHGLTPKIHADEIEPYGGAELAAEVGAISADHLLRASDEGLRRMAERGVIGVLLPGTAFFLMTQAADARRLIDNGVPVALATDCNPGSSPTVSLPLVMSLACLHMRMTPAEALAAATINAAHAIGRSHVIGSLEPGKKADLAIFNAANYMQIMYYYGVNHTEMVIKGGKIVVNEGKVCI.

Residues His84 and His86 each contribute to the Fe(3+) site. Zn(2+) is bound by residues His84 and His86. The 4-imidazolone-5-propanoate site is built by Arg93, Tyr156, and His189. Tyr156 contacts N-formimidoyl-L-glutamate. Position 254 (His254) interacts with Fe(3+). His254 contributes to the Zn(2+) binding site. Position 257 (Glu257) interacts with 4-imidazolone-5-propanoate. Asp328 lines the Fe(3+) pocket. Asp328 is a binding site for Zn(2+). Positions 330 and 332 each coordinate N-formimidoyl-L-glutamate. Ser333 provides a ligand contact to 4-imidazolone-5-propanoate.

The protein belongs to the metallo-dependent hydrolases superfamily. HutI family. Zn(2+) is required as a cofactor. The cofactor is Fe(3+).

The protein localises to the cytoplasm. It carries out the reaction 4-imidazolone-5-propanoate + H2O = N-formimidoyl-L-glutamate. The protein operates within amino-acid degradation; L-histidine degradation into L-glutamate; N-formimidoyl-L-glutamate from L-histidine: step 3/3. Catalyzes the hydrolytic cleavage of the carbon-nitrogen bond in imidazolone-5-propanoate to yield N-formimidoyl-L-glutamate. It is the third step in the universal histidine degradation pathway. In Geobacillus thermodenitrificans (strain NG80-2), this protein is Imidazolonepropionase.